The chain runs to 357 residues: Alanine racemase (357 aa).

Lysine 33 serves as the catalytic Proton acceptor; specific for D-alanine. At lysine 33 the chain carries N6-(pyridoxal phosphate)lysine. Arginine 129 contributes to the substrate binding site. Tyrosine 253 serves as the catalytic Proton acceptor; specific for L-alanine. Methionine 301 is a substrate binding site.

Belongs to the alanine racemase family. As to quaternary structure, homodimer. Pyridoxal 5'-phosphate serves as cofactor.

The catalysed reaction is L-alanine = D-alanine. The protein operates within amino-acid biosynthesis; D-alanine biosynthesis; D-alanine from L-alanine: step 1/1. In terms of biological role, catalyzes the interconversion of L-alanine and D-alanine. Is highly specific for alanine as substrate. May serve both anabolic and catabolic purposes. The polypeptide is Alanine racemase (Pseudomonas taetrolens).